The following is a 154-amino-acid chain: uncharacterized protein (154 aa).

Disordered regions lie at residues 23 to 63 (ERVG…VVLK) and 79 to 154 (IKAA…DENE). Acidic residues predominate over residues 43 to 56 (PDEDGDHSDKEDEQ). Ser-50 bears the Phosphoserine mark. N6-acetyllysine is present on Lys-108. Ser-146 is subject to Phosphoserine.

This is an uncharacterized protein from Homo sapiens (Human).